The sequence spans 407 residues: Argininosuccinate synthase (407 aa).

ATP is bound by residues 11–19 (AYSGGLDTS) and Ala-39. Residues Tyr-90 and Ser-95 each coordinate L-citrulline. Position 120 (Gly-120) interacts with ATP. L-aspartate-binding residues include Thr-122, Asn-126, and Asp-127. Asn-126 contacts L-citrulline. L-citrulline contacts are provided by Arg-130, Ser-179, Ser-188, Glu-264, and Tyr-276.

This sequence belongs to the argininosuccinate synthase family. Type 1 subfamily. Homotetramer.

It localises to the cytoplasm. It catalyses the reaction L-citrulline + L-aspartate + ATP = 2-(N(omega)-L-arginino)succinate + AMP + diphosphate + H(+). Its pathway is amino-acid biosynthesis; L-arginine biosynthesis; L-arginine from L-ornithine and carbamoyl phosphate: step 2/3. This is Argininosuccinate synthase from Roseiflexus sp. (strain RS-1).